A 200-amino-acid polypeptide reads, in one-letter code: MGFTGPLKYNKWKIKIAALRMYTCCVERIDYDEFFEKCSLPDTLNSWFLVTQLHVWMCLVRMKQEGRAGKYMCRYIVHSMWEDVEQRGKVMGIDSVTLKNSMRSMTEIFYAAIFGYDEGIISDDRILAAALWRNLLNKQCDDPRKLELLVEYVRKQVQFLDTLDGEDLLLTGEVVWRPLVEKDAQSILKPSTPTYNDEGL.

Belongs to the CBP3 family.

Its subcellular location is the mitochondrion inner membrane. Its function is as follows. Required for the assembly of the ubiquinol-cytochrome c reductase complex (mitochondrial respiratory chain complex III or cytochrome b-c1 complex). May be involved in cytochrome b translation and/or stability. The protein is Ubiquinol-cytochrome-c reductase complex assembly factor 1 (uqcc1) of Xenopus laevis (African clawed frog).